Consider the following 115-residue polypeptide: NADH-ubiquinone oxidoreductase chain 3 (115 aa).

Helical transmembrane passes span 4-24 (LLVLLVNSILSLLLILIAFWL), 55-75 (FFLVAITFLLFDLEIALLLPL), and 87-107 (MTLTSFILISVLALGLAYEWL).

Belongs to the complex I subunit 3 family. As to quaternary structure, core subunit of respiratory chain NADH dehydrogenase (Complex I) which is composed of 45 different subunits. Interacts with TMEM186. Interacts with TMEM242.

The protein localises to the mitochondrion inner membrane. It catalyses the reaction a ubiquinone + NADH + 5 H(+)(in) = a ubiquinol + NAD(+) + 4 H(+)(out). Its function is as follows. Core subunit of the mitochondrial membrane respiratory chain NADH dehydrogenase (Complex I) which catalyzes electron transfer from NADH through the respiratory chain, using ubiquinone as an electron acceptor. Essential for the catalytic activity of complex I. The polypeptide is NADH-ubiquinone oxidoreductase chain 3 (Peromyscus eremicus (Cactus mouse)).